A 330-amino-acid polypeptide reads, in one-letter code: Aspartate--ammonia ligase (330 aa).

This sequence belongs to the class-II aminoacyl-tRNA synthetase family. AsnA subfamily.

The protein resides in the cytoplasm. It carries out the reaction L-aspartate + NH4(+) + ATP = L-asparagine + AMP + diphosphate + H(+). The protein operates within amino-acid biosynthesis; L-asparagine biosynthesis; L-asparagine from L-aspartate (ammonia route): step 1/1. The sequence is that of Aspartate--ammonia ligase from Streptococcus thermophilus (strain CNRZ 1066).